A 65-amino-acid polypeptide reads, in one-letter code: MRCLPVFIILLLLASTAAVDVAGSKLKRRLERKPYQGSQAYVKKTAFGLRKCCKRHHGCHPCGRK.

The N-terminal stretch at 1 to 18 (MRCLPVFIILLLLASTAA) is a signal peptide. Residues 19–49 (VDVAGSKLKRRLERKPYQGSQAYVKKTAFGL) constitute a propeptide that is removed on maturation. 2 disulfide bridges follow: C52-C62 and C53-C59. At P61 the chain carries 4-hydroxyproline. C62 is subject to Cysteine amide.

Belongs to the conotoxin T superfamily. Expressed by the venom duct.

It is found in the secreted. Probable neurotoxin with unknown target. Possibly targets ion channels. The sequence is that of Conotoxin Cal1.3 from Californiconus californicus (California cone).